A 412-amino-acid polypeptide reads, in one-letter code: Gamma-glutamyl phosphate reductase (412 aa).

This sequence belongs to the gamma-glutamyl phosphate reductase family.

The protein resides in the cytoplasm. It catalyses the reaction L-glutamate 5-semialdehyde + phosphate + NADP(+) = L-glutamyl 5-phosphate + NADPH + H(+). It functions in the pathway amino-acid biosynthesis; L-proline biosynthesis; L-glutamate 5-semialdehyde from L-glutamate: step 2/2. Catalyzes the NADPH-dependent reduction of L-glutamate 5-phosphate into L-glutamate 5-semialdehyde and phosphate. The product spontaneously undergoes cyclization to form 1-pyrroline-5-carboxylate. This chain is Gamma-glutamyl phosphate reductase, found in Actinobacillus pleuropneumoniae serotype 7 (strain AP76).